A 319-amino-acid chain; its full sequence is Protoheme IX farnesyltransferase (319 aa).

9 consecutive transmembrane segments (helical) span residues 34-54, 55-75, 95-115, 119-139, 155-175, 182-202, 221-241, 244-264, and 291-311; these read VMSLVVFTAFAGLVLAPGHIN, PVLGLIAILCIAVGAGASGAL, IPAGRVAPSEALAFGLVLSGF, ILGLAVNWLSAAILAFTIFFY, IVIGGAAGAFPPVIGWACVTG, VVLFLIIFLWTPAHFWALALF, VPTTKNQIVAYAVLTAIIGVV, FMGFASLGYGVVATVLGVIFV, and IFYLFAIFSALLIDRLVAVLM.

This sequence belongs to the UbiA prenyltransferase family. Protoheme IX farnesyltransferase subfamily.

It localises to the cell inner membrane. It catalyses the reaction heme b + (2E,6E)-farnesyl diphosphate + H2O = Fe(II)-heme o + diphosphate. It participates in porphyrin-containing compound metabolism; heme O biosynthesis; heme O from protoheme: step 1/1. Functionally, converts heme B (protoheme IX) to heme O by substitution of the vinyl group on carbon 2 of heme B porphyrin ring with a hydroxyethyl farnesyl side group. The sequence is that of Protoheme IX farnesyltransferase from Rhizobium rhizogenes (strain K84 / ATCC BAA-868) (Agrobacterium radiobacter).